We begin with the raw amino-acid sequence, 1216 residues long: ATP-dependent helicase/nuclease subunit A (1216 aa).

Positions 26-488 constitute a UvrD-like helicase ATP-binding domain; sequence QKKTAEQIEA…ILLKANFRSS (463 aa). 47–54 contacts ATP; sequence ASAGSGKT. Positions 515-802 constitute a UvrD-like helicase C-terminal domain; the sequence is KHQLVFANTK…ELMTIHKSKG (288 aa).

The protein belongs to the helicase family. AddA subfamily. As to quaternary structure, heterodimer of AddA and AddB/RexB. Requires Mg(2+) as cofactor.

The enzyme catalyses Couples ATP hydrolysis with the unwinding of duplex DNA by translocating in the 3'-5' direction.. It catalyses the reaction ATP + H2O = ADP + phosphate + H(+). Its function is as follows. The heterodimer acts as both an ATP-dependent DNA helicase and an ATP-dependent, dual-direction single-stranded exonuclease. Recognizes the chi site generating a DNA molecule suitable for the initiation of homologous recombination. The AddA nuclease domain is required for chi fragment generation; this subunit has the helicase and 3' -&gt; 5' nuclease activities. This Streptococcus pneumoniae (strain ATCC 700669 / Spain 23F-1) protein is ATP-dependent helicase/nuclease subunit A.